The sequence spans 464 residues: Opioid growth factor receptor-like protein 1 (464 aa).

2 disordered regions span residues 1–91 (MGNL…AKPK) and 309–464 (ENFI…TSSG). The span at 43 to 59 (QQHDEPEQPKQPPERAG) shows a compositional bias: basic and acidic residues. Positions 74-86 (AAGAEQGGESTEG) are enriched in low complexity. Over residues 316-325 (PKKELPERSK) the composition is skewed to basic and acidic residues. Polar residues predominate over residues 327-342 (QKTPTLPASGSNGQTS). 3 stretches are compositionally biased toward basic and acidic residues: residues 363-382 (SVEEKKGASREPGEEADKPS), 390-400 (PKPRNTEKDSA), and 425-439 (SEKDGEGEDQSKDSE). Over residues 452–464 (AQQNATNPQTSSG) the composition is skewed to polar residues.

This sequence belongs to the opioid growth factor receptor family.

The protein is Opioid growth factor receptor-like protein 1 (Ogfrl1) of Mus musculus (Mouse).